Consider the following 1893-residue polypeptide: CDK5 regulatory subunit-associated protein 2 (1893 aa).

The CM1 motif; interacts with the gTuRC stretch occupies residues 51–94 (TVSPTRARNMKDFENQITELKKENFNLKLRIYFLEERMQQEFHG). The interval 58–196 (RNMKDFENQI…TEKALRLRLE (139 aa)) is interaction with NCKAP5L. Residue serine 547 is modified to Phosphoserine. The interaction with MAPRE1 stretch occupies residues 926-1208 (PGITNREAKK…LENLKQQLEE (283 aa)). Threonine 1001 bears the Phosphothreonine mark. Disordered regions lie at residues 1015–1071 (AAYQ…NPED) and 1084–1105 (SKSQ…SINT). Positions 1034–1048 (WRDKEMDSDQQRSYE) are enriched in basic and acidic residues. Serine 1238 carries the phosphoserine modification. The tract at residues 1347 to 1381 (LPESPEPSASHALSDYETSEKSFFSRDQKQDNETE) is disordered. Over residues 1364–1381 (TSEKSFFSRDQKQDNETE) the composition is skewed to basic and acidic residues. Phosphoserine is present on serine 1490. Basic and acidic residues-rich tracts occupy residues 1500 to 1519 (SVKE…ERHN) and 1651 to 1661 (PDKHDGDKYPM). Disordered regions lie at residues 1500-1521 (SVKE…HNQQ), 1646-1706 (EVPL…ATST), and 1754-1774 (QTQE…PHPA). Phosphoserine is present on residues serine 1663 and serine 1666. Polar residues-rich tracts occupy residues 1663–1706 (SDNS…ATST) and 1754–1766 (QTQE…SQEL). The segment at 1726-1768 (HVLGLIEDYEALLKQISQGQRLLAEMDIQTQEAPSSTSQELGT) is interaction with CDK5R1. The tract at residues 1726–1893 (HVLGLIEDYE…GTCSPSRPGS (168 aa)) is interaction with PCNT and AKAP9. Positions 1861–1870 (VVTHKILRKA) are required for centrosomal attachment, Golgi localization and CALM1 interaction. A Phosphoserine modification is found at serine 1893.

Homodimer. Interacts with CDK5R1 (p35 form). CDK5RAP1, CDK5RAP2 and CDK5RAP3 show competitive binding to CDK5R1. May form a complex with CDK5R1 and CDK5. Interacts with pericentrin/PCNT; the interaction is leading to centrosomal and Golgi localization of CDK5RAP2 and PCNT. Interacts with AKAP9; the interaction targets CDK5RAP2 and AKAP9 to Golgi apparatus. Interacts with MAPRE1; the interaction is direct and targets CDK5RAP2 and EB1/MAPRE1 to microtubule plus ends. Interacts with TUBG1; the interaction is leading to the centrosomal localization of CDK5RAP2 and TUBG1. Interacts with TUBGCP3. Interacts with CALM1. Interacts with CDC20. Interacts with CEP68; degradation of CEP68 in early mitosis leads to removal of CDK5RAP2 from the centrosome which promotes centriole disengagement and subsequent centriole separation. Interacts with NCKAP5L. Forms a pericentrosomal complex with AKAP9, MAPRE1 and PDE4DIP isoform 13/MMG8/SMYLE; within this complex, MAPRE1 binding to CDK5RAP2 may be mediated by PDE4DIP. Interacts with LGALS3BP; this interaction may connect the pericentrosomal complex to the gamma-tubulin ring complex (gTuRC) to promote microtubule assembly and acetylation. Interacts with CCDC66. Associates (via CM1 motif) with TUBGCP2 of the gTuRC; the interaction plays a role in gTuRC activation. Post-translationally, phosphorylated in vitro by CDK5. Widely expressed. Expressed in heart, brain, placenta, lung, liver, skeletal muscle, kidney and pancreas.

It is found in the cytoplasm. Its subcellular location is the cytoskeleton. The protein localises to the microtubule organizing center. It localises to the centrosome. The protein resides in the golgi apparatus. Functionally, potential regulator of CDK5 activity via its interaction with CDK5R1. Negative regulator of centriole disengagement (licensing) which maintains centriole engagement and cohesion. Involved in regulation of mitotic spindle orientation. Plays a role in the spindle checkpoint activation by acting as a transcriptional regulator of both BUBR1 and MAD2 promoter. Together with EB1/MAPRE1, may promote microtubule polymerization, bundle formation, growth and dynamics at the plus ends. Regulates centrosomal maturation by recruitment of the gamma-tubulin ring complex (gTuRC) onto centrosomes. In complex with PDE4DIP isoform 13/MMG8/SMYLE, MAPRE1 and AKAP9, contributes to microtubules nucleation and extension from the centrosome to the cell periphery. Required for the recruitment of AKAP9 to centrosomes. Plays a role in neurogenesis. The polypeptide is CDK5 regulatory subunit-associated protein 2 (CDK5RAP2) (Homo sapiens (Human)).